The sequence spans 227 residues: Cytochrome c oxidase subunit 2 (227 aa).

Topologically, residues 1–14 (MAYPMQLGLQDATS) are mitochondrial intermembrane. The chain crosses the membrane as a helical span at residues 15–45 (PIMEELLHFHDHTLMIVFLISSLVLYIISLM). Topologically, residues 46–59 (LTTKLTHTSTMDAQ) are mitochondrial matrix. The helical transmembrane segment at 60–87 (EVETIWTILPAIILIMIALPSLRILYMM) threads the bilayer. Residues 88-227 (DEINNPSLTV…HFEKWSASML (140 aa)) are Mitochondrial intermembrane-facing. Cu cation is bound by residues His161, Cys196, Glu198, Cys200, His204, and Met207. Position 198 (Glu198) interacts with Mg(2+).

It belongs to the cytochrome c oxidase subunit 2 family. In terms of assembly, component of the cytochrome c oxidase (complex IV, CIV), a multisubunit enzyme composed of 14 subunits. The complex is composed of a catalytic core of 3 subunits MT-CO1, MT-CO2 and MT-CO3, encoded in the mitochondrial DNA, and 11 supernumerary subunits COX4I, COX5A, COX5B, COX6A, COX6B, COX6C, COX7A, COX7B, COX7C, COX8 and NDUFA4, which are encoded in the nuclear genome. The complex exists as a monomer or a dimer and forms supercomplexes (SCs) in the inner mitochondrial membrane with NADH-ubiquinone oxidoreductase (complex I, CI) and ubiquinol-cytochrome c oxidoreductase (cytochrome b-c1 complex, complex III, CIII), resulting in different assemblies (supercomplex SCI(1)III(2)IV(1) and megacomplex MCI(2)III(2)IV(2)). Found in a complex with TMEM177, COA6, COX18, COX20, SCO1 and SCO2. Interacts with TMEM177 in a COX20-dependent manner. Interacts with COX20. Interacts with COX16. It depends on Cu cation as a cofactor.

It is found in the mitochondrion inner membrane. It carries out the reaction 4 Fe(II)-[cytochrome c] + O2 + 8 H(+)(in) = 4 Fe(III)-[cytochrome c] + 2 H2O + 4 H(+)(out). Functionally, component of the cytochrome c oxidase, the last enzyme in the mitochondrial electron transport chain which drives oxidative phosphorylation. The respiratory chain contains 3 multisubunit complexes succinate dehydrogenase (complex II, CII), ubiquinol-cytochrome c oxidoreductase (cytochrome b-c1 complex, complex III, CIII) and cytochrome c oxidase (complex IV, CIV), that cooperate to transfer electrons derived from NADH and succinate to molecular oxygen, creating an electrochemical gradient over the inner membrane that drives transmembrane transport and the ATP synthase. Cytochrome c oxidase is the component of the respiratory chain that catalyzes the reduction of oxygen to water. Electrons originating from reduced cytochrome c in the intermembrane space (IMS) are transferred via the dinuclear copper A center (CU(A)) of subunit 2 and heme A of subunit 1 to the active site in subunit 1, a binuclear center (BNC) formed by heme A3 and copper B (CU(B)). The BNC reduces molecular oxygen to 2 water molecules using 4 electrons from cytochrome c in the IMS and 4 protons from the mitochondrial matrix. This chain is Cytochrome c oxidase subunit 2 (MT-CO2), found in Damaliscus pygargus phillipsi (Blesbok).